Consider the following 553-residue polypeptide: Solute carrier family 22 member 2 (553 aa).

Topologically, residues Met1 to Thr21 are cytoplasmic. A helical transmembrane segment spans residues Phe22–Leu42. At Gly43–Asp150 the chain is on the extracellular side. Asn71 carries an N-linked (GlcNAc...) asparagine glycan. A helical membrane pass occupies residues Leu151–Ala171. The Cytoplasmic segment spans residues Asp172–Lys177. The chain crosses the membrane as a helical span at residues Phe178–Pro198. Residues Asn199–Gln210 lie on the Extracellular side of the membrane. A helical membrane pass occupies residues Gly211–Leu231. The Cytoplasmic segment spans residues Gly232–Gly238. A helical membrane pass occupies residues Ile239–Leu259. The Extracellular portion of the chain corresponds to Pro260–Arg263. The chain crosses the membrane as a helical span at residues Trp264–Pro284. The Proline-rich sequence signature appears at Pro284 to Arg288. Topologically, residues Glu285–Thr348 are cytoplasmic. Residues Leu349 to Met369 form a helical membrane-spanning segment. The Extracellular portion of the chain corresponds to Gly370–Asn375. The helical transmembrane segment at Ile376 to Leu396 threads the bilayer. The Cytoplasmic portion of the chain corresponds to Thr397–Arg404. The chain crosses the membrane as a helical span at residues Tyr405–Pro425. The Extracellular portion of the chain corresponds to Asp426–Lys432. A helical membrane pass occupies residues Ile433–Val453. Topologically, residues Asn454–Asn464 are cytoplasmic. A helical membrane pass occupies residues Leu465–Val485. Residues Tyr486–Glu494 lie on the Extracellular side of the membrane. A helical membrane pass occupies residues Phe495–Pro515. Residues Glu516–Ser553 lie on the Cytoplasmic side of the membrane.

This sequence belongs to the major facilitator (TC 2.A.1) superfamily. Organic cation transporter (TC 2.A.1.19) family. Post-translationally, tyrosine phosphorylated by tyrosine-protein kinase YES1. In terms of tissue distribution, expressed in kidney and ureter. To a lower extent, also expressed in brain and embryo.

It localises to the basolateral cell membrane. The protein localises to the basal cell membrane. Its subcellular location is the apical cell membrane. It catalyses the reaction (R)-noradrenaline(out) = (R)-noradrenaline(in). The enzyme catalyses (R)-adrenaline(out) = (R)-adrenaline(in). The catalysed reaction is serotonin(out) = serotonin(in). It carries out the reaction dopamine(out) = dopamine(in). It catalyses the reaction histamine(out) = histamine(in). The enzyme catalyses thiamine(in) = thiamine(out). The catalysed reaction is creatinine(in) = creatinine(out). It carries out the reaction 1-methylnicotinamide(out) = 1-methylnicotinamide(in). It catalyses the reaction guanidine(out) = guanidine(in). The enzyme catalyses choline(out) = choline(in). The catalysed reaction is agmatine(out) = agmatine(in). It carries out the reaction putrescine(out) = putrescine(in). It catalyses the reaction spermidine(in) = spermidine(out). The enzyme catalyses tyramine(in) = tyramine(out). The catalysed reaction is L-histidyl-L-proline diketopiperazine(in) = L-histidyl-L-proline diketopiperazine(out). It carries out the reaction (R)-salsolinol(in) = (R)-salsolinol(out). It catalyses the reaction N-methyl-(R)-salsolinol(in) = N-methyl-(R)-salsolinol(out). The enzyme catalyses acetylcholine(in) = acetylcholine(out). The catalysed reaction is prostaglandin F2alpha(out) = prostaglandin F2alpha(in). It carries out the reaction prostaglandin E2(out) = prostaglandin E2(in). With respect to regulation, tyrosine phosphorylation of the transporter leads to activation of the transport activity. TEA uptake is activated by tyrosine phosphorylation. Inhibited by cGMP, most likely through a cGMP-binding protein that interacts with OCT2. Its function is as follows. Electrogenic voltage-dependent transporter that mediates the transport of a variety of organic cations such as endogenous bioactive amines, cationic drugs and xenobiotics. Functions as a Na(+)-independent, bidirectional uniporter. Cation cellular uptake or release is driven by the electrochemical potential, i.e. membrane potential and concentration gradient. However, may also engage electroneutral cation exchange when saturating concentrations of cation substrates are reached. Predominantly expressed at the basolateral membrane of hepatocytes and proximal tubules and involved in the uptake and disposition of cationic compounds by hepatic and renal clearance from the blood flow. Implicated in monoamine neurotransmitters uptake such as histamine, dopamine, adrenaline/epinephrine, noradrenaline/norepinephrine, serotonin and tyramine, thereby supporting a physiological role in the central nervous system by regulating interstitial concentrations of neurotransmitters. Also capable of transporting dopaminergic neuromodulators cyclo(his-pro), salsolinol and N-methyl-salsolinol, thereby involved in the maintenance of dopaminergic cell integrity in the central nervous system. Mediates the bidirectional transport of acetylcholine (ACh) at the apical membrane of ciliated cell in airway epithelium, thereby playing a role in luminal release of ACh from bronchial epithelium. Also transports guanidine and endogenous monoamines such as vitamin B1/thiamine, creatinine and N-1-methylnicotinamide (NMN). Mediates the uptake and efflux of quaternary ammonium compound choline. Mediates the bidirectional transport of polyamine agmatine and the uptake of polyamines putrescine and spermidine. Able to transport non-amine endogenous compounds such as prostaglandin E2 (PGE2) and prostaglandin F2-alpha (PGF2-alpha). Also involved in the uptake of xenobiotic 4-(4-(dimethylamino)styryl)-N-methylpyridinium (ASP). May contribute to regulate the transport of organic compounds in testis across the blood-testis-barrier. In Mus musculus (Mouse), this protein is Solute carrier family 22 member 2.